Consider the following 389-residue polypeptide: Protein MEI2-like 7 (389 aa).

Positions 170–184 (RRGMSKVYKPRKPQR) are enriched in basic residues. A disordered region spans residues 170-211 (RRGMSKVYKPRKPQRAGRERSPSPSPVFTTRPMSPTPPMQKL). The RRM domain occupies 216–320 (TTVMVRNIPN…KIIDIRAARI (105 aa)). Residues 351 to 370 (PRDGSTAGAGAPSPPAVKTV) are disordered.

Functionally, probable RNA-binding protein that may play a role in growth regulation. This chain is Protein MEI2-like 7 (OML7), found in Oryza sativa subsp. japonica (Rice).